The primary structure comprises 472 residues: L-fuculokinase (472 aa).

It belongs to the FGGY kinase family. The cofactor is a divalent metal cation.

The enzyme catalyses L-fuculose + ATP = L-fuculose 1-phosphate + ADP + H(+). It participates in carbohydrate degradation; L-fucose degradation; L-lactaldehyde and glycerone phosphate from L-fucose: step 2/3. Functionally, catalyzes the phosphorylation of L-fuculose. This is L-fuculokinase from Salmonella typhi.